The chain runs to 83 residues: Large ribosomal subunit protein bL27 (83 aa).

Positions 1–25 (MAHKKGQGASRNGRDSESKRLGLKV) are disordered.

Belongs to the bacterial ribosomal protein bL27 family.

This Chlamydia trachomatis serovar L2 (strain ATCC VR-902B / DSM 19102 / 434/Bu) protein is Large ribosomal subunit protein bL27.